We begin with the raw amino-acid sequence, 147 residues long: Large ribosomal subunit protein bL9 (147 aa).

The protein belongs to the bacterial ribosomal protein bL9 family.

Functionally, binds to the 23S rRNA. This is Large ribosomal subunit protein bL9 from Shouchella clausii (strain KSM-K16) (Alkalihalobacillus clausii).